Here is a 689-residue protein sequence, read N- to C-terminus: Glycine--tRNA ligase beta subunit (689 aa).

It belongs to the class-II aminoacyl-tRNA synthetase family. As to quaternary structure, tetramer of two alpha and two beta subunits.

The protein localises to the cytoplasm. The enzyme catalyses tRNA(Gly) + glycine + ATP = glycyl-tRNA(Gly) + AMP + diphosphate. In Lacticaseibacillus paracasei (strain ATCC 334 / BCRC 17002 / CCUG 31169 / CIP 107868 / KCTC 3260 / NRRL B-441) (Lactobacillus paracasei), this protein is Glycine--tRNA ligase beta subunit.